A 170-amino-acid chain; its full sequence is Probable inosine/xanthosine triphosphatase (170 aa).

Mg(2+) is bound at residue Glu31.

It belongs to the YjjX NTPase family. As to quaternary structure, homodimer. Mg(2+) serves as cofactor. The cofactor is Mn(2+).

The catalysed reaction is XTP + H2O = XDP + phosphate + H(+). The enzyme catalyses ITP + H2O = IDP + phosphate + H(+). Phosphatase that hydrolyzes non-canonical purine nucleotides such as XTP and ITP to their respective diphosphate derivatives. Probably excludes non-canonical purines from DNA/RNA precursor pool, thus preventing their incorporation into DNA/RNA and avoiding chromosomal lesions. This Oceanobacillus iheyensis (strain DSM 14371 / CIP 107618 / JCM 11309 / KCTC 3954 / HTE831) protein is Probable inosine/xanthosine triphosphatase.